Reading from the N-terminus, the 480-residue chain is Glutathione reductase (480 aa).

2 residues coordinate FAD: Ser-31 and Gly-32. Ser-31 contributes to the glutathione binding site. Arg-38 is a binding site for glutathione. FAD-binding residues include Glu-51, Thr-58, Cys-59, and Lys-67. An intrachain disulfide couples Cys-59 to Cys-64. Position 121 (Tyr-121) interacts with glutathione. Ala-137 serves as a coordination point for FAD. Residues Ile-206, Glu-209, Arg-226, and Gly-291 each coordinate NADP(+). An FAD-binding site is contributed by Asp-331. NADP(+) is bound at residue Glu-337. Position 339 (Thr-339) interacts with FAD. Arg-347 is a glutathione binding site. NADP(+) is bound at residue Val-372. Lys-422 contacts glutathione. His-469 contributes to the FAD binding site. The active-site Proton acceptor is the His-469.

This sequence belongs to the class-I pyridine nucleotide-disulfide oxidoreductase family. In terms of assembly, homodimer. FAD is required as a cofactor.

The protein resides in the cytoplasm. It localises to the mitochondrion. It catalyses the reaction 2 glutathione + NADP(+) = glutathione disulfide + NADPH + H(+). Functionally, catalyzes the reduction of glutathione disulfide (GSSG) to reduced glutathione (GSH). Constitutes the major mechanism to maintain a high GSH:GSSG ratio in the cytosol. This chain is Glutathione reductase (GLR1), found in Eremothecium gossypii (strain ATCC 10895 / CBS 109.51 / FGSC 9923 / NRRL Y-1056) (Yeast).